The primary structure comprises 423 residues: Acyl-coenzyme A diphosphatase FITM2 (423 aa).

Residues 1–47 (MATKRRPLRPNLGGTAGSPSSSGSNMNFRPGGPDITRSEARGTRPTA) form a disordered region. Over 1 to 75 (MATKRRPLRP…KTIFFNTDLK (75 aa)) the chain is Cytoplasmic. The chain crosses the membrane as a helical span at residues 76 to 96 (VALYLGSLFVISVIGDFVPFP). Topologically, residues 97 to 113 (KTYFARSDNLFNQYFVK) are lumenal. A helical membrane pass occupies residues 114-134 (IGWGWTLLFVVPFLVLSAYTI). Topologically, residues 135-146 (TCGDHKRMLRHH) are cytoplasmic. Residues 147-167 (FPRIVIATFFWFFWTKLFNVV) form a helical membrane-spanning segment. The Lumenal portion of the chain corresponds to 168–191 (ENSYGRCTTKGYATKSSCLKAGHL). The helical transmembrane segment at 192 to 212 (WKGFDISGHAFILIHSSLVLI) threads the bilayer. Histidine 200 is a catalytic residue. Topologically, residues 213 to 270 (EEARPIIRWETIKEHIRNERHNRSTAENSGTNPLRTLNEEQMRSLQFLYKRLTPIIRT) are cytoplasmic. A helical membrane pass occupies residues 271–291 (LFIGMAALQLLWDIMLVGTML). Topologically, residues 292 to 299 (YYHRMIEK) are lumenal. Histidine 294 is an active-site residue. A helical transmembrane segment spans residues 300–320 (VISGIIAILTWYFTYRFWYPT). Residues 321–423 (PGLLPEAPGN…RDREQQTLES (103 aa)) are Cytoplasmic-facing. 2 disordered regions span residues 344 to 381 (FKRPSHLSTGAATTSSGSNSSRTNLNGKAATTGVPRDQ) and 400 to 423 (AAANLLMSDQQKRERDREQQTLES). Residues 351 to 367 (STGAATTSSGSNSSRTN) show a composition bias toward low complexity. A compositionally biased stretch (basic and acidic residues) spans 409-423 (QQKRERDREQQTLES).

It belongs to the FIT family. FIT2 subfamily.

Its subcellular location is the endoplasmic reticulum membrane. It catalyses the reaction an acyl-CoA + H2O = an acyl-4'-phosphopantetheine + adenosine 3',5'-bisphosphate + 2 H(+). Functionally, fatty acyl-coenzyme A (CoA) diphosphatase that hydrolyzes fatty acyl-CoA to yield acyl-4'-phosphopantetheine and adenosine 3',5'-bisphosphate. Preferentially hydrolyzes unsaturated long-chain acyl-CoA substrates in the endoplasmic reticulum (ER) lumen. This catalytic activity is required for maintaining ER structure and for lipid droplets (LDs) biogenesis, which are lipid storage organelles involved in maintaining lipid and energy homeostasis. May directly bind to diacylglycerol (DAGs) and triacylglycerol, which is also important for LD biogenesis. May support directional budding of nacent LDs from the ER into the cytosol by reducing DAG levels at sites of LD formation. Plays a role in the regulation of cell morphology and cytoskeletal organization. Required for correct morphology of nociceptive multi-dendritic sensory neurons. Required for normal mechanical amplification in hearing. The protein is Acyl-coenzyme A diphosphatase FITM2 of Drosophila melanogaster (Fruit fly).